A 302-amino-acid polypeptide reads, in one-letter code: Homoserine O-acetyltransferase (302 aa).

C142 acts as the Acyl-thioester intermediate in catalysis. Residues K163 and S192 each coordinate substrate. H235 (proton acceptor) is an active-site residue. Residue E237 is part of the active site. R249 contacts substrate.

It belongs to the MetA family.

It localises to the cytoplasm. It carries out the reaction L-homoserine + acetyl-CoA = O-acetyl-L-homoserine + CoA. Its pathway is amino-acid biosynthesis; L-methionine biosynthesis via de novo pathway; O-acetyl-L-homoserine from L-homoserine: step 1/1. Functionally, transfers an acetyl group from acetyl-CoA to L-homoserine, forming acetyl-L-homoserine. The sequence is that of Homoserine O-acetyltransferase from Bacillus licheniformis (strain ATCC 14580 / DSM 13 / JCM 2505 / CCUG 7422 / NBRC 12200 / NCIMB 9375 / NCTC 10341 / NRRL NRS-1264 / Gibson 46).